Reading from the N-terminus, the 244-residue chain is Phosphoadenosine 5'-phosphosulfate reductase (244 aa).

Residue Cys-239 is the Nucleophile; cysteine thiosulfonate intermediate of the active site.

It belongs to the PAPS reductase family. CysH subfamily.

It is found in the cytoplasm. The enzyme catalyses [thioredoxin]-disulfide + sulfite + adenosine 3',5'-bisphosphate + 2 H(+) = [thioredoxin]-dithiol + 3'-phosphoadenylyl sulfate. Its pathway is sulfur metabolism; hydrogen sulfide biosynthesis; sulfite from sulfate: step 3/3. Its function is as follows. Catalyzes the formation of sulfite from phosphoadenosine 5'-phosphosulfate (PAPS) using thioredoxin as an electron donor. This Salmonella dublin (strain CT_02021853) protein is Phosphoadenosine 5'-phosphosulfate reductase.